The chain runs to 338 residues: Ketol-acid reductoisomerase (NADP(+)) (338 aa).

One can recognise a KARI N-terminal Rossmann domain in the interval 1–181 (MRVFYDKDCD…GGGRTGIIET (181 aa)). Residues 24–27 (YGSQ), Arg-47, Ser-50, Thr-52, and 82–85 (DEFQ) contribute to the NADP(+) site. Residue His-107 is part of the active site. Gly-133 is an NADP(+) binding site. The 146-residue stretch at 182-327 (TFKDETETDL…EKLRAMMPWI (146 aa)) folds into the KARI C-terminal knotted domain. Positions 190, 194, 226, and 230 each coordinate Mg(2+). Substrate is bound at residue Ser-251.

The protein belongs to the ketol-acid reductoisomerase family. Mg(2+) is required as a cofactor.

The enzyme catalyses (2R)-2,3-dihydroxy-3-methylbutanoate + NADP(+) = (2S)-2-acetolactate + NADPH + H(+). The catalysed reaction is (2R,3R)-2,3-dihydroxy-3-methylpentanoate + NADP(+) = (S)-2-ethyl-2-hydroxy-3-oxobutanoate + NADPH + H(+). It functions in the pathway amino-acid biosynthesis; L-isoleucine biosynthesis; L-isoleucine from 2-oxobutanoate: step 2/4. It participates in amino-acid biosynthesis; L-valine biosynthesis; L-valine from pyruvate: step 2/4. In terms of biological role, involved in the biosynthesis of branched-chain amino acids (BCAA). Catalyzes an alkyl-migration followed by a ketol-acid reduction of (S)-2-acetolactate (S2AL) to yield (R)-2,3-dihydroxy-isovalerate. In the isomerase reaction, S2AL is rearranged via a Mg-dependent methyl migration to produce 3-hydroxy-3-methyl-2-ketobutyrate (HMKB). In the reductase reaction, this 2-ketoacid undergoes a metal-dependent reduction by NADPH to yield (R)-2,3-dihydroxy-isovalerate. The polypeptide is Ketol-acid reductoisomerase (NADP(+)) (Pseudomonas paraeruginosa (strain DSM 24068 / PA7) (Pseudomonas aeruginosa (strain PA7))).